The chain runs to 142 residues: Small heat shock protein IbpB (142 aa).

A sHSP domain is found at 26 to 137 (SGESQSFPPY…APQRIAINER (112 aa)).

It belongs to the small heat shock protein (HSP20) family. As to quaternary structure, homodimer. Forms homomultimers of about 100-150 subunits at optimal growth temperatures. Conformation changes to oligomers at high temperatures or high ionic concentrations. The decrease in size of the multimers is accompanied by an increase in chaperone activity.

The protein localises to the cytoplasm. Functionally, associates with aggregated proteins, together with IbpA, to stabilize and protect them from irreversible denaturation and extensive proteolysis during heat shock and oxidative stress. Aggregated proteins bound to the IbpAB complex are more efficiently refolded and reactivated by the ATP-dependent chaperone systems ClpB and DnaK/DnaJ/GrpE. Its activity is ATP-independent. This is Small heat shock protein IbpB from Salmonella newport (strain SL254).